The following is a 450-amino-acid chain: tRNA modification GTPase MnmE (450 aa).

Residues Arg23, Glu80, and Arg123 each coordinate (6S)-5-formyl-5,6,7,8-tetrahydrofolate. Residues 219–372 (GLHVVLAGKP…LRQRLLQLAG (154 aa)) form the TrmE-type G domain. Residue Asn229 coordinates K(+). Residues 229-234 (NVGKSS), 248-254 (TPIAGTT), 273-276 (DTAG), and 353-355 (SAR) each bind GTP. Mg(2+) is bound at residue Ser233. K(+)-binding residues include Thr248, Ile250, and Thr253. Position 254 (Thr254) interacts with Mg(2+). Lys450 serves as a coordination point for (6S)-5-formyl-5,6,7,8-tetrahydrofolate.

This sequence belongs to the TRAFAC class TrmE-Era-EngA-EngB-Septin-like GTPase superfamily. TrmE GTPase family. Homodimer. Heterotetramer of two MnmE and two MnmG subunits. It depends on K(+) as a cofactor.

It is found in the cytoplasm. In terms of biological role, exhibits a very high intrinsic GTPase hydrolysis rate. Involved in the addition of a carboxymethylaminomethyl (cmnm) group at the wobble position (U34) of certain tRNAs, forming tRNA-cmnm(5)s(2)U34. The protein is tRNA modification GTPase MnmE of Bordetella bronchiseptica (strain ATCC BAA-588 / NCTC 13252 / RB50) (Alcaligenes bronchisepticus).